Here is a 901-residue protein sequence, read N- to C-terminus: HTH-type transcriptional regulator MalT (901 aa).

39 to 46 (SPAGYGKT) provides a ligand contact to ATP. Positions 829 to 894 (ELIRTSPLTQ…DAVQHAQQLL (66 aa)) constitute an HTH luxR-type domain. Residues 853-872 (NEQIAGELAVAATTIKTHIR) constitute a DNA-binding region (H-T-H motif).

Belongs to the MalT family. In terms of assembly, monomer in solution. Oligomerizes to an active state in the presence of the positive effectors ATP and maltotriose.

With respect to regulation, activated by ATP and maltotriose, which are both required for DNA binding. Its function is as follows. Positively regulates the transcription of the maltose regulon whose gene products are responsible for uptake and catabolism of malto-oligosaccharides. Specifically binds to the promoter region of its target genes, recognizing a short DNA motif called the MalT box. This chain is HTH-type transcriptional regulator MalT, found in Salmonella agona (strain SL483).